Here is a 240-residue protein sequence, read N- to C-terminus: Putative N-acetylmannosamine-6-phosphate 2-epimerase (240 aa).

The protein belongs to the NanE family.

The enzyme catalyses an N-acyl-D-glucosamine 6-phosphate = an N-acyl-D-mannosamine 6-phosphate. Its pathway is amino-sugar metabolism; N-acetylneuraminate degradation; D-fructose 6-phosphate from N-acetylneuraminate: step 3/5. Its function is as follows. Converts N-acetylmannosamine-6-phosphate (ManNAc-6-P) to N-acetylglucosamine-6-phosphate (GlcNAc-6-P). The protein is Putative N-acetylmannosamine-6-phosphate 2-epimerase of Vibrio cholerae serotype O1 (strain ATCC 39541 / Classical Ogawa 395 / O395).